A 108-amino-acid polypeptide reads, in one-letter code: T-cell acute lymphocytic leukemia protein 2 (108 aa).

The 53-residue stretch at 2–54 (TRKIFTNTRERWRQQNVNSAFAKLRKLIPTHPPDKKLSKNETLRLAMRYINFL) folds into the bHLH domain. The disordered stretch occupies residues 89–108 (DRTLLENYQVPSPGPSHHIP).

This Homo sapiens (Human) protein is T-cell acute lymphocytic leukemia protein 2 (TAL2).